The chain runs to 354 residues: Rhodopsin (354 aa).

At 1–36 (MNGTEGPNFYIPMSNKTGVVRSPFEYPQYYLAEPWQ) the chain is on the extracellular side. Residues Asn-2 and Asn-15 are each glycosylated (N-linked (GlcNAc...) asparagine). The chain crosses the membrane as a helical span at residues 37 to 61 (YSILCAYMFLLILLGFPINFMTLYV). The Cytoplasmic portion of the chain corresponds to 62 to 73 (TIQHKKLRTPLN). Residues 74-96 (YILLNLAFANHFMVLCGFTVTMY) form a helical membrane-spanning segment. The Extracellular portion of the chain corresponds to 97-110 (SSMNGYFILGATGC). The cysteines at positions 110 and 187 are disulfide-linked. Residues 111-133 (YVEGFFATLGGEIALWSLVVLAI) traverse the membrane as a helical segment. The 'Ionic lock' involved in activated form stabilization signature appears at 134-136 (ERY). The Cytoplasmic portion of the chain corresponds to 134–152 (ERYVVVCKPMSNFRFSENH). A helical transmembrane segment spans residues 153-173 (AVMGVAFTWIMALSCAVPPLL). Residues 174–202 (GWSRYIPEGMQCSCGVDYYTLKPEVNNES) are Extracellular-facing. Residues 203-224 (FVIYMFVVHFTIPLIIIFFCYG) form a helical membrane-spanning segment. The Cytoplasmic portion of the chain corresponds to 225 to 252 (RLVCTVKEAAAQQQESATTQKAEKEVTR). The helical transmembrane segment at 253–274 (MVIIMVVFFLICWVPYASVAFF) threads the bilayer. Residues 275–286 (IFSNQGSEFGPI) lie on the Extracellular side of the membrane. A helical membrane pass occupies residues 287-308 (FMTVPAFFAKSSSIYNPVIYIM). At Lys-296 the chain carries N6-(retinylidene)lysine. The Cytoplasmic portion of the chain corresponds to 309–354 (LNKQFRNCMITTLCCGKNPFGEDDASSAATSKTEASSVSSSQVSPA). S-palmitoyl cysteine attachment occurs at residues Cys-322 and Cys-323. The tract at residues 331 to 354 (DDASSAATSKTEASSVSSSQVSPA) is disordered. Residues 334 to 354 (SSAATSKTEASSVSSSQVSPA) show a composition bias toward low complexity.

This sequence belongs to the G-protein coupled receptor 1 family. Opsin subfamily. Contains one covalently linked retinal chromophore. Upon light absorption, the covalently bound 11-cis-retinal is converted to all-trans-retinal. After hydrolysis of the Schiff base and release of the covalently bound all-trans-retinal, active rhodopsin is regenerated by binding of a fresh molecule of 11-cis-retinal.

Its subcellular location is the membrane. The protein localises to the cell projection. It is found in the cilium. The protein resides in the photoreceptor outer segment. In terms of biological role, photoreceptor required for image-forming vision at low light intensity. Required for photoreceptor cell viability after birth. Light-induced isomerization of 11-cis to all-trans retinal triggers a conformational change that activates signaling via G-proteins. Subsequent receptor phosphorylation mediates displacement of the bound G-protein alpha subunit by arrestin and terminates signaling. The polypeptide is Rhodopsin (RHO) (Bufo bufo (European toad)).